Reading from the N-terminus, the 64-residue chain is Large ribosomal subunit protein uL30 (64 aa).

This sequence belongs to the universal ribosomal protein uL30 family. Part of the 50S ribosomal subunit.

The protein is Large ribosomal subunit protein uL30 of Methylorubrum populi (strain ATCC BAA-705 / NCIMB 13946 / BJ001) (Methylobacterium populi).